A 296-amino-acid polypeptide reads, in one-letter code: Nitrogenase iron protein (296 aa).

An ATP-binding site is contributed by G10 to S17. Residue C98 coordinates [4Fe-4S] cluster. An ADP-ribosylarginine; by dinitrogenase reductase ADP-ribosyltransferase modification is found at R101. A [4Fe-4S] cluster-binding site is contributed by C133.

The protein belongs to the NifH/BchL/ChlL family. As to quaternary structure, homodimer. The cofactor is [4Fe-4S] cluster. The reversible ADP-ribosylation of Arg-101 inactivates the nitrogenase reductase and regulates nitrogenase activity.

It catalyses the reaction N2 + 8 reduced [2Fe-2S]-[ferredoxin] + 16 ATP + 16 H2O = H2 + 8 oxidized [2Fe-2S]-[ferredoxin] + 2 NH4(+) + 16 ADP + 16 phosphate + 6 H(+). Its function is as follows. The key enzymatic reactions in nitrogen fixation are catalyzed by the nitrogenase complex, which has 2 components: the iron protein and the molybdenum-iron protein. The polypeptide is Nitrogenase iron protein (Magnetococcus marinus (strain ATCC BAA-1437 / JCM 17883 / MC-1)).